The sequence spans 1379 residues: Hepatocyte growth factor receptor (1379 aa).

The first 24 residues, 1–24, serve as a signal peptide directing secretion; it reads MKAPTVLAPGILVLLLSLVQRSHG. Residues 25-931 are Extracellular-facing; it reads ECKEALVKSE…VIVQPDQNFA (907 aa). The 488-residue stretch at 27 to 514 folds into the Sema domain; the sequence is KEALVKSEMN…TGKKITKIPL (488 aa). Asparagine 45 is a glycosylation site (N-linked (GlcNAc...) asparagine). 4 cysteine pairs are disulfide-bonded: cysteine 95–cysteine 101, cysteine 98–cysteine 160, cysteine 133–cysteine 141, and cysteine 171–cysteine 174. N-linked (GlcNAc...) asparagine glycosylation is present at asparagine 106. Residues asparagine 201 and asparagine 357 are each glycosylated (N-linked (GlcNAc...) asparagine). 2 cysteine pairs are disulfide-bonded: cysteine 297–cysteine 362 and cysteine 384–cysteine 396. 2 N-linked (GlcNAc...) asparagine glycosylation sites follow: asparagine 398 and asparagine 404. 4 cysteine pairs are disulfide-bonded: cysteine 519/cysteine 537, cysteine 525/cysteine 560, cysteine 528/cysteine 544, and cysteine 540/cysteine 550. IPT/TIG domains lie at 562–654, 656–738, and 741–835; these read PAVY…FSYV, PVIT…FSYR, and PVVY…LTYV. Threonine 581 carries an O-linked (Man) threonine glycan. N-linked (GlcNAc...) asparagine glycans are attached at residues asparagine 606 and asparagine 634. Threonine 675 and threonine 760 each carry an O-linked (Man) threonine glycan. N-linked (GlcNAc...) asparagine glycosylation is found at asparagine 784 and asparagine 878. A helical membrane pass occupies residues 932–954; that stretch reads GLIIGAVSISVVVLLLSGLFLWM. The Cytoplasmic portion of the chain corresponds to 955-1379; sequence RKRKHKDLGS…QDNIDGEGNT (425 aa). Serine 964 bears the Phosphoserine mark. The residue at position 975 (threonine 975) is a Phosphothreonine. Residues serine 988, serine 995, and serine 998 each carry the phosphoserine modification. Position 1001 is a phosphotyrosine (tyrosine 1001). Positions 1076 to 1343 constitute a Protein kinase domain; the sequence is VHFNEVIGRG…RISSIFSTFI (268 aa). ATP contacts are provided by residues 1082-1090 and lysine 1108; that span reads IGRGHFGCV. Residue aspartate 1202 is the Proton acceptor of the active site. An interaction with RANBP9 region spans residues 1210-1379; sequence LDEKFTVKVA…QDNIDGEGNT (170 aa). A Phosphotyrosine modification is found at tyrosine 1228. Phosphotyrosine; by autocatalysis is present on residues tyrosine 1232 and tyrosine 1233. Threonine 1287 bears the Phosphothreonine mark. The tract at residues 1318–1357 is interaction with MUC20; sequence WHPKAEMRPSFSELVSRISSIFSTFIGEHYVHVNATYVNV. Residues tyrosine 1347 and tyrosine 1354 each carry the phosphotyrosine; by autocatalysis modification. Position 1363 is a phosphotyrosine (tyrosine 1363).

It belongs to the protein kinase superfamily. Tyr protein kinase family. As to quaternary structure, heterodimer made of an alpha chain (50 kDa) and a beta chain (145 kDa) which are disulfide linked. Binds PLXNB1. Interacts when phosphorylated with downstream effectors including STAT3, PIK3R1, SRC, PCLG1, GRB2 and GAB1. When phosphorylated at Tyr-1354, interacts with INPPL1/SHIP2. Interacts with RANBP9 and RANBP10. Interacts with INPP5D/SHIP1. Interacts with SPSB1, SPSB2, SPSB4 and probably SPSB3. SPSB1 binding occurs in the presence and in the absence of HGF, however HGF treatment has a positive effect on this interaction. Interacts with MUC20; prevents interaction with GRB2 and suppresses hepatocyte growth factor-induced cell proliferation. Interacts with GRB10. Interacts with PTPN1 and PTPN2. Interacts with HSP90AA1 and HSP90AB1; the interaction suppresses MET kinase activity. Interacts with tensin TNS3. Interacts (when phosphorylated) with tensin TNS4 (via SH2 domain); the interaction increases MET protein stability by inhibiting MET endocytosis and subsequent lysosomal degradation. (Microbial infection) Interacts with L.monocytogenes InlB. InlB probably dimerizes upon binding to MET, which encourages subsequent dimerization of MET. Autophosphorylated in response to ligand binding on Tyr-1232 and Tyr-1233 in the kinase domain leading to further phosphorylation of Tyr-1347 and Tyr-1354 in the C-terminal multifunctional docking site. Dephosphorylated by PTPRJ at Tyr-1347 and Tyr-1363. Dephosphorylated by PTPN1 and PTPN2. Post-translationally, ubiquitinated. Ubiquitination by CBL regulates MET endocytosis, resulting in decreasing plasma membrane receptor abundance, and in endosomal degradation and/or recycling of internalized receptors. In terms of processing, O-mannosylation of IPT/TIG domains by TMEM260 is required for protein maturation. O-mannosylated residues are composed of single mannose glycans that are not elongated or modified. (Microbial infection) Tyrosine phosphorylation is stimulated by L.monocytogenes InlB.

Its subcellular location is the membrane. It catalyses the reaction L-tyrosyl-[protein] + ATP = O-phospho-L-tyrosyl-[protein] + ADP + H(+). Its activity is regulated as follows. In its inactive state, the C-terminal tail interacts with the catalytic domain and inhibits the kinase activity. Upon ligand binding, the C-terminal tail is displaced and becomes phosphorylated, thus increasing the kinase activity. Receptor tyrosine kinase that transduces signals from the extracellular matrix into the cytoplasm by binding to hepatocyte growth factor/HGF ligand. Regulates many physiological processes including proliferation, scattering, morphogenesis and survival. Ligand binding at the cell surface induces autophosphorylation of MET on its intracellular domain that provides docking sites for downstream signaling molecules. Following activation by ligand, interacts with the PI3-kinase subunit PIK3R1, PLCG1, SRC, GRB2, STAT3 or the adapter GAB1. Recruitment of these downstream effectors by MET leads to the activation of several signaling cascades including the RAS-ERK, PI3 kinase-AKT, or PLCgamma-PKC. The RAS-ERK activation is associated with the morphogenetic effects while PI3K/AKT coordinates prosurvival effects. During embryonic development, MET signaling plays a role in gastrulation, development and migration of neuronal precursors, angiogenesis and kidney formation. During skeletal muscle development, it is crucial for the migration of muscle progenitor cells and for the proliferation of secondary myoblasts. In adults, participates in wound healing as well as organ regeneration and tissue remodeling. Also promotes differentiation and proliferation of hematopoietic cells. May regulate cortical bone osteogenesis. In terms of biological role, (Microbial infection) Acts as a receptor for Listeria monocytogenes internalin InlB, mediating entry of the pathogen into cells. This is Hepatocyte growth factor receptor (Met) from Mus musculus (Mouse).